Consider the following 163-residue polypeptide: Large ribosomal subunit protein uL10 (163 aa).

It belongs to the universal ribosomal protein uL10 family. As to quaternary structure, part of the ribosomal stalk of the 50S ribosomal subunit. The N-terminus interacts with L11 and the large rRNA to form the base of the stalk. The C-terminus forms an elongated spine to which L12 dimers bind in a sequential fashion forming a multimeric L10(L12)X complex.

Its function is as follows. Forms part of the ribosomal stalk, playing a central role in the interaction of the ribosome with GTP-bound translation factors. This Haemophilus influenzae (strain PittGG) protein is Large ribosomal subunit protein uL10.